The following is a 163-amino-acid chain: 3-isopropylmalate dehydratase small subunit (163 aa).

This sequence belongs to the LeuD family. LeuD type 2 subfamily. Heterodimer of LeuC and LeuD.

It carries out the reaction (2R,3S)-3-isopropylmalate = (2S)-2-isopropylmalate. It functions in the pathway amino-acid biosynthesis; L-leucine biosynthesis; L-leucine from 3-methyl-2-oxobutanoate: step 2/4. Functionally, catalyzes the isomerization between 2-isopropylmalate and 3-isopropylmalate, via the formation of 2-isopropylmaleate. This chain is 3-isopropylmalate dehydratase small subunit, found in Ruminiclostridium cellulolyticum (strain ATCC 35319 / DSM 5812 / JCM 6584 / H10) (Clostridium cellulolyticum).